The sequence spans 291 residues: Protease HtpX homolog (291 aa).

The next 2 membrane-spanning stretches (helical) occupy residues 4-24 (IALF…VASL) and 38-58 (LGAL…ISLL). His-144 is a Zn(2+) binding site. The active site involves Glu-145. Position 148 (His-148) interacts with Zn(2+). The next 2 helical transmembrane spans lie at 159–179 (LIQG…GYAV) and 199–219 (VTTI…VAWF). Glu-224 is a Zn(2+) binding site.

The protein belongs to the peptidase M48B family. Requires Zn(2+) as cofactor.

The protein resides in the cell inner membrane. The chain is Protease HtpX homolog from Paracidovorax citrulli (strain AAC00-1) (Acidovorax citrulli).